The sequence spans 89 residues: DNA/RNA-binding protein Alba 2 (89 aa).

Position 12 is an N6-acetyllysine (Lys12).

Belongs to the histone-like Alba family. In terms of processing, acetylated. Acetylation at Lys-12 decreases DNA-binding affinity.

It is found in the cytoplasm. The protein resides in the chromosome. In terms of biological role, binds double-stranded DNA tightly but without sequence specificity. Involved in DNA compaction. This chain is DNA/RNA-binding protein Alba 2, found in Saccharolobus shibatae (strain ATCC 51178 / DSM 5389 / JCM 8931 / NBRC 15437 / B12) (Sulfolobus shibatae).